Reading from the N-terminus, the 49-residue chain is Large ribosomal subunit protein bL33B (49 aa).

It belongs to the bacterial ribosomal protein bL33 family.

This Listeria welshimeri serovar 6b (strain ATCC 35897 / DSM 20650 / CCUG 15529 / CIP 8149 / NCTC 11857 / SLCC 5334 / V8) protein is Large ribosomal subunit protein bL33B.